A 140-amino-acid polypeptide reads, in one-letter code: Transcription antitermination protein NusB (140 aa).

This sequence belongs to the NusB family.

In terms of biological role, involved in transcription antitermination. Required for transcription of ribosomal RNA (rRNA) genes. Binds specifically to the boxA antiterminator sequence of the ribosomal RNA (rrn) operons. This is Transcription antitermination protein NusB from Myxococcus xanthus (strain DK1622).